Reading from the N-terminus, the 141-residue chain is Nucleoside diphosphate kinase (141 aa).

ATP contacts are provided by lysine 11, phenylalanine 59, arginine 87, threonine 93, arginine 104, and asparagine 114. The active-site Pros-phosphohistidine intermediate is histidine 117.

This sequence belongs to the NDK family. As to quaternary structure, homotetramer. Requires Mg(2+) as cofactor.

It localises to the cytoplasm. It catalyses the reaction a 2'-deoxyribonucleoside 5'-diphosphate + ATP = a 2'-deoxyribonucleoside 5'-triphosphate + ADP. The enzyme catalyses a ribonucleoside 5'-diphosphate + ATP = a ribonucleoside 5'-triphosphate + ADP. Its function is as follows. Major role in the synthesis of nucleoside triphosphates other than ATP. The ATP gamma phosphate is transferred to the NDP beta phosphate via a ping-pong mechanism, using a phosphorylated active-site intermediate. The chain is Nucleoside diphosphate kinase from Hamiltonella defensa subsp. Acyrthosiphon pisum (strain 5AT).